A 320-amino-acid polypeptide reads, in one-letter code: Probable cell division protein WhiA (320 aa).

Positions 282-315 form a DNA-binding region, H-T-H motif; that stretch reads SLEELGRAARPQISKDAVAGRIRRLLQRAEKAEQ.

It belongs to the WhiA family.

Functionally, involved in cell division and chromosome segregation. The polypeptide is Probable cell division protein WhiA (Bifidobacterium animalis subsp. lactis (strain AD011)).